Here is a 310-residue protein sequence, read N- to C-terminus: Serine/threonine-protein phosphatase 4 catalytic subunit (310 aa).

Mn(2+) is bound by residues Asp53, His55, Asp81, and Asn113. Residue His114 is the Proton donor of the active site. Residues His163 and His237 each coordinate Mn(2+). Leu310 carries the post-translational modification Leucine methyl ester.

This sequence belongs to the PPP phosphatase family. PP-4 (PP-X) subfamily. As to quaternary structure, catalytic subunit of the histone H2A phosphatase complex (HTP-C) containing PPH3, PSY2 and PSY4. Mn(2+) serves as cofactor.

Its subcellular location is the cytoplasm. It is found in the nucleus. It catalyses the reaction O-phospho-L-seryl-[protein] + H2O = L-seryl-[protein] + phosphate. The catalysed reaction is O-phospho-L-threonyl-[protein] + H2O = L-threonyl-[protein] + phosphate. Functionally, involved in the dephosphorylation and activation of the transcription factor GLN3 in response to nutrient availability. Forms the histone H2A phosphatase complex in association with the regulatory subunits PSY2 and PSY4, which dephosphorylates H2AS128ph (gamma-H2A) that has been displaced from sites of DNA lesions in the double-stranded DNA break repair process. Dephosphorylation is necessary for efficient recovery from the DNA damage checkpoint. The protein is Serine/threonine-protein phosphatase 4 catalytic subunit (PPH3) of Eremothecium gossypii (strain ATCC 10895 / CBS 109.51 / FGSC 9923 / NRRL Y-1056) (Yeast).